Consider the following 215-residue polypeptide: Cytochrome b6 (215 aa).

The chain crosses the membrane as a helical span at residues 32-52; that stretch reads IFYCLGGITLTCFLVQVATGF. C35 is a heme c binding site. Positions 86 and 100 each coordinate heme b. 3 helical membrane-spanning segments follow: residues 90–110, 116–136, and 186–206; these read ASMM…TGGF, LTWV…VTGY, and LHTF…FLMI. The heme b site is built by H187 and H202.

Belongs to the cytochrome b family. PetB subfamily. The 4 large subunits of the cytochrome b6-f complex are cytochrome b6, subunit IV (17 kDa polypeptide, PetD), cytochrome f and the Rieske protein, while the 4 small subunits are PetG, PetL, PetM and PetN. The complex functions as a dimer. Heme b serves as cofactor. Requires heme c as cofactor.

The protein resides in the plastid. The protein localises to the chloroplast thylakoid membrane. Functionally, component of the cytochrome b6-f complex, which mediates electron transfer between photosystem II (PSII) and photosystem I (PSI), cyclic electron flow around PSI, and state transitions. This is Cytochrome b6 from Pelargonium hortorum (Common geranium).